The following is a 518-amino-acid chain: Glycerophosphoinositol transporter 1 (518 aa).

Topologically, residues 1 to 44 are cytoplasmic; sequence MEDKDITSVNEKEVNENTNPRIIKYDAERRATRTETSKKDKWKN. A helical membrane pass occupies residues 45–65; the sequence is IVTIIASGFALISDGYVNGSM. Topologically, residues 66 to 91 are extracellular; sequence SMLNKVFVMEYGKKNYSSKVSTRVSN. Residue Asn80 is glycosylated (N-linked (GlcNAc...) asparagine). A helical transmembrane segment spans residues 92-112; it reads AALVGIIFGQFFMGIAADYYS. At 113–114 the chain is on the cytoplasmic side; it reads RK. The helical transmembrane segment at 115–136 threads the bilayer; the sequence is SCILVATAILVIGSALCAASHG. Residues 137–138 are Extracellular-facing; it reads TT. The helical transmembrane segment at 139-159 threads the bilayer; that stretch reads VPGMFWMLTVMRGLVGIGVGA. Residues 160-184 are Cytoplasmic-facing; sequence EYPTSTLSANESANEYTTTKRGGIL. A helical transmembrane segment spans residues 185-205; that stretch reads VMVTNLPLAFGGPFATIIFLI. Residues 206-216 lie on the Extracellular side of the membrane; that stretch reads VYKICSGTKHL. Residues 217–237 traverse the membrane as a helical segment; it reads EAIWRTVFAIGCFWPLSVFYF. The Cytoplasmic segment spans residues 238–268; that stretch reads RWKTATTEVYEKGRIKRNIPYFLALKFYWKR. The helical transmembrane segment at 269–289 threads the bilayer; sequence LLGTCGTWFMYDFVTFPNGIF. The Extracellular segment spans residues 290-306; that stretch reads SSTIISSVIKDQNDLVK. A helical transmembrane segment spans residues 307–327; the sequence is VAEWNLLLGVLAVLGVPIGAY. Residues 328–335 are Cytoplasmic-facing; that stretch reads LSDRIGRK. Residues 336-356 traverse the membrane as a helical segment; sequence YTLMFGFSGYIIFGLIIGCAY. The Extracellular segment spans residues 357-360; sequence DQLK. A helical membrane pass occupies residues 361–381; sequence KITPLFIIFYAFMNMLGNAGP. Topologically, residues 382–399 are cytoplasmic; sequence GDMLGVISSEASATAVRG. A helical transmembrane segment spans residues 400 to 420; the sequence is VFYGLSAVTGKIGSVVGVECF. Over 421–430 the chain is Extracellular; the sequence is QPIRDNLGAR. Residues 431–451 traverse the membrane as a helical segment; sequence WTFIIAAICGLIGIIITYFFV. Residues 452 to 518 lie on the Cytoplasmic side of the membrane; the sequence is PHSLESDLMK…IISVRQVDQS (67 aa).

It belongs to the major facilitator superfamily. Sugar transporter (TC 2.A.1.1) family.

Its subcellular location is the cell membrane. The enzyme catalyses sn-glycerol 3-phosphocholine(out) = sn-glycerol 3-phosphocholine(in). It catalyses the reaction sn-glycero-3-phospho-1D-myo-inositol(out) = sn-glycero-3-phospho-1D-myo-inositol(in). Functionally, glycerophosphodiester transporter that mediates uptake of both glycerophosphoinositol (GroPIns) and glycerophosphocholine (GroPCho) as sources of the nutrients inositol and phosphate. In Saccharomyces cerevisiae (strain ATCC 204508 / S288c) (Baker's yeast), this protein is Glycerophosphoinositol transporter 1.